A 66-amino-acid chain; its full sequence is Cold shock protein CspB (66 aa).

In terms of domain architecture, CSD spans 4 to 63 (GKVKWFNNEKGYGFIEVEGGSDVFVHFTAIQGEGFKSLEEGQEVSFEIVQGNRGPQAANV).

In terms of assembly, homodimer.

It is found in the cytoplasm. Affects cell viability at low temperatures. The sequence is that of Cold shock protein CspB (cspB) from Geobacillus stearothermophilus (Bacillus stearothermophilus).